A 435-amino-acid polypeptide reads, in one-letter code: Glutamyl-tRNA(Gln) amidotransferase subunit D (435 aa).

An Asparaginase/glutaminase domain is found at 91–419; it reads PDVSIISTGG…EMAREMMREN (329 aa). Active-site residues include Thr-101, Thr-177, Asp-178, and Lys-254.

Belongs to the asparaginase 1 family. GatD subfamily. As to quaternary structure, heterodimer of GatD and GatE.

It carries out the reaction L-glutamyl-tRNA(Gln) + L-glutamine + ATP + H2O = L-glutaminyl-tRNA(Gln) + L-glutamate + ADP + phosphate + H(+). Its function is as follows. Allows the formation of correctly charged Gln-tRNA(Gln) through the transamidation of misacylated Glu-tRNA(Gln) in organisms which lack glutaminyl-tRNA synthetase. The reaction takes place in the presence of glutamine and ATP through an activated gamma-phospho-Glu-tRNA(Gln). The GatDE system is specific for glutamate and does not act on aspartate. The protein is Glutamyl-tRNA(Gln) amidotransferase subunit D (gatD) of Methanothermobacter thermautotrophicus (strain ATCC 29096 / DSM 1053 / JCM 10044 / NBRC 100330 / Delta H) (Methanobacterium thermoautotrophicum).